Consider the following 1894-residue polypeptide: Plexin-A2 (1894 aa).

The signal sequence occupies residues 1–34 (MEQRRFYLRAMQADNLSVVLLSVAWLLLARGTTG). Residues N15 and N76 are each glycosylated (N-linked (GlcNAc...) asparagine). In terms of domain architecture, Sema spans 35 to 508 (MPQYSTFHSE…SERQVTRVPV (474 aa)). The Extracellular segment spans residues 35 to 1237 (MPQYSTFHSE…VISDSLLTLP (1203 aa)). 2 disulfides stabilise this stretch: C94-C103 and C129-C137. N-linked (GlcNAc...) asparagine glycans are attached at residues N163 and N327. 8 cysteine pairs are disulfide-bonded: C284-C405, C300-C356, C374-C393, C511-C528, C517-C559, C520-C537, C531-C543, and C594-C613. N-linked (GlcNAc...) asparagine glycans are attached at residues N598, N696, and N756. IPT/TIG domains follow at residues 858–951 (PQIT…QYTF), 954–1037 (PSVL…QFEY), 1041–1139 (PRVQ…KFIY), and 1143–1228 (PTFE…SVSV). Residues N1180 and N1205 are each glycosylated (N-linked (GlcNAc...) asparagine). Residues 1238-1258 (AIISIAAGGSLLLIIVIIVLI) traverse the membrane as a helical segment. The Cytoplasmic segment spans residues 1259–1894 (AYKRKSREND…HLINAMSIES (636 aa)). Residues 1261–1310 (KRKSRENDLTLKRLQMQMDNLESRVALECKEAFAELQTDINELTSDLDRS) are a coiled coil. S1612 is modified (phosphoserine).

This sequence belongs to the plexin family. In terms of assembly, homodimer. Interacts with RND1. Interacts directly with NRP1 and NRP2. The PLXNA2 homodimer interacts with a SEMA6A homodimer, giving rise to a heterotetramer.

It is found in the cell membrane. In terms of biological role, coreceptor for SEMA3A and SEMA6A. Necessary for signaling by SEMA6A and class 3 semaphorins and subsequent remodeling of the cytoskeleton. Plays a role in axon guidance, invasive growth and cell migration. Class 3 semaphorins bind to a complex composed of a neuropilin and a plexin. The plexin modulates the affinity of the complex for specific semaphorins, and its cytoplasmic domain is required for the activation of down-stream signaling events in the cytoplasm. The polypeptide is Plexin-A2 (Plxna2) (Mus musculus (Mouse)).